We begin with the raw amino-acid sequence, 492 residues long: Bifunctional purine biosynthesis protein PurH (492 aa).

In terms of domain architecture, MGS-like spans 1–144 (MKKAILSVSN…KNYKHVTTIV (144 aa)).

Belongs to the PurH family.

It catalyses the reaction (6R)-10-formyltetrahydrofolate + 5-amino-1-(5-phospho-beta-D-ribosyl)imidazole-4-carboxamide = 5-formamido-1-(5-phospho-D-ribosyl)imidazole-4-carboxamide + (6S)-5,6,7,8-tetrahydrofolate. It carries out the reaction IMP + H2O = 5-formamido-1-(5-phospho-D-ribosyl)imidazole-4-carboxamide. The protein operates within purine metabolism; IMP biosynthesis via de novo pathway; 5-formamido-1-(5-phospho-D-ribosyl)imidazole-4-carboxamide from 5-amino-1-(5-phospho-D-ribosyl)imidazole-4-carboxamide (10-formyl THF route): step 1/1. It participates in purine metabolism; IMP biosynthesis via de novo pathway; IMP from 5-formamido-1-(5-phospho-D-ribosyl)imidazole-4-carboxamide: step 1/1. The sequence is that of Bifunctional purine biosynthesis protein PurH from Staphylococcus aureus (strain bovine RF122 / ET3-1).